The chain runs to 227 residues: Cytochrome c oxidase subunit 2 (227 aa).

At M1–S14 the chain is on the mitochondrial intermembrane side. The helical transmembrane segment at P15–M45 threads the bilayer. Residues L46–Q59 lie on the Mitochondrial matrix side of the membrane. The helical transmembrane segment at E60–M87 threads the bilayer. Over D88–L227 the chain is Mitochondrial intermembrane. Cu cation-binding residues include H161, C196, E198, C200, H204, and M207. E198 provides a ligand contact to Mg(2+).

This sequence belongs to the cytochrome c oxidase subunit 2 family. In terms of assembly, component of the cytochrome c oxidase (complex IV, CIV), a multisubunit enzyme composed of 14 subunits. The complex is composed of a catalytic core of 3 subunits MT-CO1, MT-CO2 and MT-CO3, encoded in the mitochondrial DNA, and 11 supernumerary subunits COX4I, COX5A, COX5B, COX6A, COX6B, COX6C, COX7A, COX7B, COX7C, COX8 and NDUFA4, which are encoded in the nuclear genome. The complex exists as a monomer or a dimer and forms supercomplexes (SCs) in the inner mitochondrial membrane with NADH-ubiquinone oxidoreductase (complex I, CI) and ubiquinol-cytochrome c oxidoreductase (cytochrome b-c1 complex, complex III, CIII), resulting in different assemblies (supercomplex SCI(1)III(2)IV(1) and megacomplex MCI(2)III(2)IV(2)). Found in a complex with TMEM177, COA6, COX18, COX20, SCO1 and SCO2. Interacts with TMEM177 in a COX20-dependent manner. Interacts with COX20. Interacts with COX16. Cu cation serves as cofactor.

The protein resides in the mitochondrion inner membrane. The enzyme catalyses 4 Fe(II)-[cytochrome c] + O2 + 8 H(+)(in) = 4 Fe(III)-[cytochrome c] + 2 H2O + 4 H(+)(out). Functionally, component of the cytochrome c oxidase, the last enzyme in the mitochondrial electron transport chain which drives oxidative phosphorylation. The respiratory chain contains 3 multisubunit complexes succinate dehydrogenase (complex II, CII), ubiquinol-cytochrome c oxidoreductase (cytochrome b-c1 complex, complex III, CIII) and cytochrome c oxidase (complex IV, CIV), that cooperate to transfer electrons derived from NADH and succinate to molecular oxygen, creating an electrochemical gradient over the inner membrane that drives transmembrane transport and the ATP synthase. Cytochrome c oxidase is the component of the respiratory chain that catalyzes the reduction of oxygen to water. Electrons originating from reduced cytochrome c in the intermembrane space (IMS) are transferred via the dinuclear copper A center (CU(A)) of subunit 2 and heme A of subunit 1 to the active site in subunit 1, a binuclear center (BNC) formed by heme A3 and copper B (CU(B)). The BNC reduces molecular oxygen to 2 water molecules using 4 electrons from cytochrome c in the IMS and 4 protons from the mitochondrial matrix. In Gazella spekei (Speke's gazelle), this protein is Cytochrome c oxidase subunit 2 (MT-CO2).